We begin with the raw amino-acid sequence, 248 residues long: Adenosylcobinamide-GDP ribazoletransferase (248 aa).

Helical transmembrane passes span 24-44 (EVNLKKGSALLPFVGLIIGAW), 47-67 (LVFTLVALVMPLPVAIIAGLF), 70-90 (IIITGGFHVDALADTADGLFS), 106-126 (VGANGVIAICFYFLFYGALFL), 134-154 (IGWLFFVLPIVAKGVTMLLFA), 165-185 (LGSIFLGVPWWPIAISQLFVL), 186-206 (FILGLVFSYIGLLAYAGVILF), and 228-248 (AGGQMGQLVCLFCLVLVWGLI).

Belongs to the CobS family. Requires Mg(2+) as cofactor.

Its subcellular location is the cell membrane. It catalyses the reaction alpha-ribazole + adenosylcob(III)inamide-GDP = adenosylcob(III)alamin + GMP + H(+). It carries out the reaction alpha-ribazole 5'-phosphate + adenosylcob(III)inamide-GDP = adenosylcob(III)alamin 5'-phosphate + GMP + H(+). It functions in the pathway cofactor biosynthesis; adenosylcobalamin biosynthesis; adenosylcobalamin from cob(II)yrinate a,c-diamide: step 7/7. Its function is as follows. Joins adenosylcobinamide-GDP and alpha-ribazole to generate adenosylcobalamin (Ado-cobalamin). Also synthesizes adenosylcobalamin 5'-phosphate from adenosylcobinamide-GDP and alpha-ribazole 5'-phosphate. This is Adenosylcobinamide-GDP ribazoletransferase from Listeria welshimeri serovar 6b (strain ATCC 35897 / DSM 20650 / CCUG 15529 / CIP 8149 / NCTC 11857 / SLCC 5334 / V8).